The sequence spans 140 residues: Large ribosomal subunit protein bL17 (140 aa).

The protein belongs to the bacterial ribosomal protein bL17 family. In terms of assembly, part of the 50S ribosomal subunit. Contacts protein L32.

This chain is Large ribosomal subunit protein bL17, found in Roseobacter denitrificans (strain ATCC 33942 / OCh 114) (Erythrobacter sp. (strain OCh 114)).